A 151-amino-acid polypeptide reads, in one-letter code: Large ribosomal subunit protein uL13 (151 aa).

The disordered stretch occupies residues 126–151 (YPGSNHPHEAQKPEKLTIQTIPGGER). Positions 131-140 (HPHEAQKPEK) are enriched in basic and acidic residues.

The protein belongs to the universal ribosomal protein uL13 family. In terms of assembly, part of the 50S ribosomal subunit.

This protein is one of the early assembly proteins of the 50S ribosomal subunit, although it is not seen to bind rRNA by itself. It is important during the early stages of 50S assembly. The chain is Large ribosomal subunit protein uL13 from Trichodesmium erythraeum (strain IMS101).